Consider the following 190-residue polypeptide: Threonylcarbamoyl-AMP synthase (190 aa).

A YrdC-like domain is found at 7–190; sequence IGSIAAAVDL…ALTGELFRQG (184 aa).

It belongs to the SUA5 family. TsaC subfamily.

Its subcellular location is the cytoplasm. The enzyme catalyses L-threonine + hydrogencarbonate + ATP = L-threonylcarbamoyladenylate + diphosphate + H2O. Its function is as follows. Required for the formation of a threonylcarbamoyl group on adenosine at position 37 (t(6)A37) in tRNAs that read codons beginning with adenine. Catalyzes the conversion of L-threonine, HCO(3)(-)/CO(2) and ATP to give threonylcarbamoyl-AMP (TC-AMP) as the acyladenylate intermediate, with the release of diphosphate. This Salmonella typhimurium (strain LT2 / SGSC1412 / ATCC 700720) protein is Threonylcarbamoyl-AMP synthase.